A 446-amino-acid chain; its full sequence is Tol-Pal system protein TolB (446 aa).

The N-terminal stretch at 1-43 (MRKLWAPNWLSRRQNANPTRDQSRHALMAWLAAALMSAGAAHA) is a signal peptide.

It belongs to the TolB family. In terms of assembly, the Tol-Pal system is composed of five core proteins: the inner membrane proteins TolA, TolQ and TolR, the periplasmic protein TolB and the outer membrane protein Pal. They form a network linking the inner and outer membranes and the peptidoglycan layer.

The protein resides in the periplasm. In terms of biological role, part of the Tol-Pal system, which plays a role in outer membrane invagination during cell division and is important for maintaining outer membrane integrity. The polypeptide is Tol-Pal system protein TolB (Cupriavidus metallidurans (strain ATCC 43123 / DSM 2839 / NBRC 102507 / CH34) (Ralstonia metallidurans)).